The sequence spans 265 residues: 4-hydroxy-tetrahydrodipicolinate reductase (265 aa).

NAD(+)-binding positions include 7–12 (GASGRM) and D33. R34 contributes to the NADP(+) binding site. Residues 96–98 (GTT) and 120–123 (AANM) each bind NAD(+). The Proton donor/acceptor role is filled by H153. H154 contacts (S)-2,3,4,5-tetrahydrodipicolinate. The active-site Proton donor is K157. 163–164 (GT) is a (S)-2,3,4,5-tetrahydrodipicolinate binding site.

This sequence belongs to the DapB family.

It localises to the cytoplasm. The enzyme catalyses (S)-2,3,4,5-tetrahydrodipicolinate + NAD(+) + H2O = (2S,4S)-4-hydroxy-2,3,4,5-tetrahydrodipicolinate + NADH + H(+). It carries out the reaction (S)-2,3,4,5-tetrahydrodipicolinate + NADP(+) + H2O = (2S,4S)-4-hydroxy-2,3,4,5-tetrahydrodipicolinate + NADPH + H(+). It functions in the pathway amino-acid biosynthesis; L-lysine biosynthesis via DAP pathway; (S)-tetrahydrodipicolinate from L-aspartate: step 4/4. Catalyzes the conversion of 4-hydroxy-tetrahydrodipicolinate (HTPA) to tetrahydrodipicolinate. The protein is 4-hydroxy-tetrahydrodipicolinate reductase of Burkholderia ambifaria (strain ATCC BAA-244 / DSM 16087 / CCUG 44356 / LMG 19182 / AMMD) (Burkholderia cepacia (strain AMMD)).